The chain runs to 723 residues: Polyribonucleotide nucleotidyltransferase (723 aa).

Residues aspartate 488 and aspartate 494 each contribute to the Mg(2+) site. One can recognise a KH domain in the interval 555–614 (PKIITLNIKPEKIKDVIGPGGKQINAIIEETGVKIDIEQDGTVYIASQDQAMNRKAIAII). Residues 624-692 (GEVYTGKVRR…HQGRVNLSRK (69 aa)) enclose the S1 motif domain. Positions 692 to 723 (KALLEKKEQPEGDKKPQAEKKFYPKTKKPESK) are disordered. The span at 693 to 723 (ALLEKKEQPEGDKKPQAEKKFYPKTKKPESK) shows a compositional bias: basic and acidic residues.

The protein belongs to the polyribonucleotide nucleotidyltransferase family. It depends on Mg(2+) as a cofactor.

The protein resides in the cytoplasm. The catalysed reaction is RNA(n+1) + phosphate = RNA(n) + a ribonucleoside 5'-diphosphate. In terms of biological role, involved in mRNA degradation. Catalyzes the phosphorolysis of single-stranded polyribonucleotides processively in the 3'- to 5'-direction. This Listeria innocua serovar 6a (strain ATCC BAA-680 / CLIP 11262) protein is Polyribonucleotide nucleotidyltransferase.